The chain runs to 216 residues: Imidazole glycerol phosphate synthase subunit HisH (216 aa).

The Glutamine amidotransferase type-1 domain maps to 2-216; sequence RVAIIDYGSG…LITNFLRWRP (215 aa). The active-site Nucleophile is cysteine 88. Catalysis depends on residues histidine 196 and glutamate 198.

In terms of assembly, heterodimer of HisH and HisF.

The protein resides in the cytoplasm. It carries out the reaction 5-[(5-phospho-1-deoxy-D-ribulos-1-ylimino)methylamino]-1-(5-phospho-beta-D-ribosyl)imidazole-4-carboxamide + L-glutamine = D-erythro-1-(imidazol-4-yl)glycerol 3-phosphate + 5-amino-1-(5-phospho-beta-D-ribosyl)imidazole-4-carboxamide + L-glutamate + H(+). It catalyses the reaction L-glutamine + H2O = L-glutamate + NH4(+). Its pathway is amino-acid biosynthesis; L-histidine biosynthesis; L-histidine from 5-phospho-alpha-D-ribose 1-diphosphate: step 5/9. Functionally, IGPS catalyzes the conversion of PRFAR and glutamine to IGP, AICAR and glutamate. The HisH subunit catalyzes the hydrolysis of glutamine to glutamate and ammonia as part of the synthesis of IGP and AICAR. The resulting ammonia molecule is channeled to the active site of HisF. In Mesorhizobium japonicum (strain LMG 29417 / CECT 9101 / MAFF 303099) (Mesorhizobium loti (strain MAFF 303099)), this protein is Imidazole glycerol phosphate synthase subunit HisH.